Reading from the N-terminus, the 415-residue chain is Histidine--tRNA ligase (415 aa).

The protein belongs to the class-II aminoacyl-tRNA synthetase family. As to quaternary structure, homodimer.

It is found in the cytoplasm. It carries out the reaction tRNA(His) + L-histidine + ATP = L-histidyl-tRNA(His) + AMP + diphosphate + H(+). In Clostridium botulinum (strain ATCC 19397 / Type A), this protein is Histidine--tRNA ligase.